A 1061-amino-acid polypeptide reads, in one-letter code: DNA primase TraC (1061 aa).

Residues 850–938 enclose the Toprim domain; that stretch reads PALVIGEGYA…GKAIFPIFAP (89 aa). The tract at residues 1034 to 1061 is disordered; the sequence is EGQRQKVQQLKQQDIEQQEQRQRRARTY.

Required for autonomous replication in E.coli. Transferred into the recipient cell during bacterial conjugation. Catalyzes the synthesis of short oligoribonucleotide primers with CpA or pCpA at their 5'-termini on a single-stranded template DNA. The chain is DNA primase TraC (traC) from Escherichia coli.